Consider the following 506-residue polypeptide: ATP synthase subunit alpha (506 aa).

Position 171 to 178 (171 to 178 (GDRQTGKT)) interacts with ATP.

The protein belongs to the ATPase alpha/beta chains family. In terms of assembly, F-type ATPases have 2 components, CF(1) - the catalytic core - and CF(0) - the membrane proton channel. CF(1) has five subunits: alpha(3), beta(3), gamma(1), delta(1), epsilon(1). CF(0) has four main subunits: a, b, b' and c.

Its subcellular location is the cellular thylakoid membrane. It carries out the reaction ATP + H2O + 4 H(+)(in) = ADP + phosphate + 5 H(+)(out). Produces ATP from ADP in the presence of a proton gradient across the membrane. The alpha chain is a regulatory subunit. This Nostoc punctiforme (strain ATCC 29133 / PCC 73102) protein is ATP synthase subunit alpha.